Here is a 291-residue protein sequence, read N- to C-terminus: Inactive dihydropteroate synthase 2 (291 aa).

Positions 15 to 272 (QLIMAIVNRT…EVVATRRVLE (258 aa)) constitute a Pterin-binding domain.

Belongs to the DHPS family. Homodimer.

In terms of biological role, has very low affinity for the DHPS substrate 6-hydroxymethyl-7,8-dihydropterin-pyrophosphate, but can bind the inhibitor dapsone. Seems to lack dihydropteroate synthase activity, and does probably not function in folate metabolism. The sequence is that of Inactive dihydropteroate synthase 2 (folP2) from Mycobacterium leprae (strain TN).